The sequence spans 488 residues: Nitrogen metabolite repression protein nmr (488 aa).

The disordered stretch occupies residues 1–45 (MPAEILSELPLRPAPRDIKIPNAMHNEERRHKHSRSSYSEMSPLM). Residues 14 to 29 (APRDIKIPNAMHNEER) are compositionally biased toward basic and acidic residues. Residues 36–45 (SSYSEMSPLM) show a composition bias toward polar residues. NADP(+) is bound by residues 71–76 (NAAGRQ), Asn-165, Lys-215, and 237–240 (YNNN). Residues 75–76 (RQ), 165–167 (NTT), Lys-215, and 237–240 (YNNN) contribute to the NAD(+) site. A dispensable for NMR function region spans residues 412 to 488 (EEYDGGGGNN…NKRADEEWLA (77 aa)). A disordered region spans residues 422-488 (IGNNHNNHHQ…NKRADEEWLA (67 aa)). Positions 438–459 (HQNGHQNGHNGINGHIVNGGVD) are enriched in low complexity. Residues 460–473 (SESEEEDSDSDDEG) are compositionally biased toward acidic residues.

The protein belongs to the NmrA-type oxidoreductase family. In terms of assembly, interacts with nit-2.

The protein localises to the nucleus. Its function is as follows. May be a redox sensor protein. Negative transcriptional regulator involved in the post-transcriptional modulation of the GATA-type transcription factor nit-2, forming part of a system controlling nitrogen metabolite repression. The protein is Nitrogen metabolite repression protein nmr (nmr) of Neurospora crassa (strain ATCC 24698 / 74-OR23-1A / CBS 708.71 / DSM 1257 / FGSC 987).